A 502-amino-acid chain; its full sequence is ATP synthase subunit alpha (502 aa).

169 to 176 lines the ATP pocket; it reads GDRATGKT.

It belongs to the ATPase alpha/beta chains family. As to quaternary structure, F-type ATPases have 2 components, CF(1) - the catalytic core - and CF(0) - the membrane proton channel. CF(1) has five subunits: alpha(3), beta(3), gamma(1), delta(1), epsilon(1). CF(0) has three main subunits: a(1), b(2) and c(9-12). The alpha and beta chains form an alternating ring which encloses part of the gamma chain. CF(1) is attached to CF(0) by a central stalk formed by the gamma and epsilon chains, while a peripheral stalk is formed by the delta and b chains.

The protein localises to the cell inner membrane. It carries out the reaction ATP + H2O + 4 H(+)(in) = ADP + phosphate + 5 H(+)(out). In terms of biological role, produces ATP from ADP in the presence of a proton gradient across the membrane. The alpha chain is a regulatory subunit. This is ATP synthase subunit alpha from Hydrogenobaculum sp. (strain Y04AAS1).